A 384-amino-acid chain; its full sequence is Queuine tRNA-ribosyltransferase (384 aa).

Asp-93 functions as the Proton acceptor in the catalytic mechanism. Residues 93 to 97 (DSGGF), Asp-147, Gln-202, and Gly-229 contribute to the substrate site. The RNA binding stretch occupies residues 260 to 266 (GVGYPEE). The Nucleophile role is filled by Asp-279. The RNA binding; important for wobble base 34 recognition stretch occupies residues 284-288 (TRAAR). Zn(2+)-binding residues include Cys-317, Cys-319, Cys-322, and His-348.

The protein belongs to the queuine tRNA-ribosyltransferase family. In terms of assembly, homodimer. Within each dimer, one monomer is responsible for RNA recognition and catalysis, while the other monomer binds to the replacement base PreQ1. It depends on Zn(2+) as a cofactor.

It carries out the reaction 7-aminomethyl-7-carbaguanine + guanosine(34) in tRNA = 7-aminomethyl-7-carbaguanosine(34) in tRNA + guanine. It participates in tRNA modification; tRNA-queuosine biosynthesis. Its function is as follows. Catalyzes the base-exchange of a guanine (G) residue with the queuine precursor 7-aminomethyl-7-deazaguanine (PreQ1) at position 34 (anticodon wobble position) in tRNAs with GU(N) anticodons (tRNA-Asp, -Asn, -His and -Tyr). Catalysis occurs through a double-displacement mechanism. The nucleophile active site attacks the C1' of nucleotide 34 to detach the guanine base from the RNA, forming a covalent enzyme-RNA intermediate. The proton acceptor active site deprotonates the incoming PreQ1, allowing a nucleophilic attack on the C1' of the ribose to form the product. After dissociation, two additional enzymatic reactions on the tRNA convert PreQ1 to queuine (Q), resulting in the hypermodified nucleoside queuosine (7-(((4,5-cis-dihydroxy-2-cyclopenten-1-yl)amino)methyl)-7-deazaguanosine). The polypeptide is Queuine tRNA-ribosyltransferase (Koribacter versatilis (strain Ellin345)).